The sequence spans 74 residues: MDSEVQRDGRILDLIDDAWREDKLPYEDVAIPLNELPDPEQDNGGTTESVKEQEMKWTDLALQYLHENVPPIGN.

The interval 33-53 is disordered; that stretch reads LNELPDPEQDNGGTTESVKEQ.

Belongs to the APC13 family. As to quaternary structure, the mammalian APC/C is composed at least of 14 distinct subunits ANAPC1, ANAPC2, CDC27/APC3, ANAPC4, ANAPC5, CDC16/APC6, ANAPC7, CDC23/APC8, ANAPC10, ANAPC11, CDC26/APC12, ANAPC13, ANAPC15 and ANAPC16 that assemble into a complex of at least 19 chains with a combined molecular mass of around 1.2 MDa; APC/C interacts with FZR1 and FBXO5.

It localises to the nucleus. The protein operates within protein modification; protein ubiquitination. In terms of biological role, component of the anaphase promoting complex/cyclosome (APC/C), a cell cycle-regulated E3 ubiquitin ligase that controls progression through mitosis and the G1 phase of the cell cycle. The APC/C complex acts by mediating ubiquitination and subsequent degradation of target proteins: it mainly mediates the formation of 'Lys-11'-linked polyubiquitin chains and, to a lower extent, the formation of 'Lys-48'- and 'Lys-63'-linked polyubiquitin chains. The APC/C complex catalyzes assembly of branched 'Lys-11'-/'Lys-48'-linked branched ubiquitin chains on target proteins. The polypeptide is Anaphase-promoting complex subunit 13 (ANAPC13) (Pongo abelii (Sumatran orangutan)).